The primary structure comprises 299 residues: Oxygen-dependent coproporphyrinogen-III oxidase (299 aa).

A substrate-binding site is contributed by S92. Residues H96 and H106 each coordinate a divalent metal cation. H106 serves as the catalytic Proton donor. 108–110 (NVR) is a binding site for substrate. Residues H145 and H175 each coordinate a divalent metal cation. The interval 240-275 (YVEFNLVWDRGTLFGLQTGGRTESILMSMPPLVRWE) is important for dimerization. A substrate-binding site is contributed by 258-260 (GGR).

It belongs to the aerobic coproporphyrinogen-III oxidase family. Homodimer. A divalent metal cation serves as cofactor.

The protein localises to the cytoplasm. The catalysed reaction is coproporphyrinogen III + O2 + 2 H(+) = protoporphyrinogen IX + 2 CO2 + 2 H2O. It participates in porphyrin-containing compound metabolism; protoporphyrin-IX biosynthesis; protoporphyrinogen-IX from coproporphyrinogen-III (O2 route): step 1/1. Its function is as follows. Involved in the heme biosynthesis. Catalyzes the aerobic oxidative decarboxylation of propionate groups of rings A and B of coproporphyrinogen-III to yield the vinyl groups in protoporphyrinogen-IX. The protein is Oxygen-dependent coproporphyrinogen-III oxidase of Shigella flexneri.